Reading from the N-terminus, the 514-residue chain is CUGBP Elav-like family member 2 (514 aa).

3 consecutive RRM domains span residues 44–127 (IKMF…PADS), 136–216 (RKLF…FADT), and 429–507 (ANLF…LKRS).

Belongs to the CELF/BRUNOL family.

It localises to the nucleus. Its subcellular location is the cytoplasm. In terms of biological role, RNA-binding protein implicated in the regulation of several post-transcriptional events. May be involved in pre-mRNA alternative splicing, mRNA translation repression and stability. This is CUGBP Elav-like family member 2 (celf2) from Danio rerio (Zebrafish).